A 203-amino-acid chain; its full sequence is IQ domain-containing protein F3 (203 aa).

The segment covering 1 to 12 (MELDQDKKKETP) has biased composition (basic and acidic residues). The tract at residues 1–111 (MELDQDKKKE…CETQEADRSE (111 aa)) is disordered. The stretch at 13-82 (EETENVNEVQ…EADKAILERS (70 aa)) forms a coiled coil. A compositionally biased stretch (acidic residues) spans 29–38 (DEETEAEAEE). Positions 39–51 (ADKAILERSDSVK) are enriched in basic and acidic residues. Residues 64-73 (DEETEAEAEE) are compositionally biased toward acidic residues. 2 stretches are compositionally biased toward basic and acidic residues: residues 74–86 (ADKA…DSVK) and 96–111 (QIQE…DRSE). Positions 129-158 (VMLAGVKIQAWWRGTLVRRTLLLAALNAWT) constitute an IQ domain.

This chain is IQ domain-containing protein F3 (Iqcf3), found in Mus musculus (Mouse).